The chain runs to 370 residues: 4-hydroxy-3-methylbut-2-en-1-yl diphosphate synthase (flavodoxin) (370 aa).

[4Fe-4S] cluster-binding residues include C268, C271, C303, and E310.

Belongs to the IspG family. [4Fe-4S] cluster is required as a cofactor.

It catalyses the reaction (2E)-4-hydroxy-3-methylbut-2-enyl diphosphate + oxidized [flavodoxin] + H2O + 2 H(+) = 2-C-methyl-D-erythritol 2,4-cyclic diphosphate + reduced [flavodoxin]. The protein operates within isoprenoid biosynthesis; isopentenyl diphosphate biosynthesis via DXP pathway; isopentenyl diphosphate from 1-deoxy-D-xylulose 5-phosphate: step 5/6. Functionally, converts 2C-methyl-D-erythritol 2,4-cyclodiphosphate (ME-2,4cPP) into 1-hydroxy-2-methyl-2-(E)-butenyl 4-diphosphate. The sequence is that of 4-hydroxy-3-methylbut-2-en-1-yl diphosphate synthase (flavodoxin) from Bacillus cereus (strain B4264).